We begin with the raw amino-acid sequence, 283 residues long: Putative pyruvate, phosphate dikinase regulatory protein (283 aa).

Position 154–161 (glycine 154–threonine 161) interacts with ADP.

It belongs to the pyruvate, phosphate/water dikinase regulatory protein family. PDRP subfamily.

It catalyses the reaction N(tele)-phospho-L-histidyl/L-threonyl-[pyruvate, phosphate dikinase] + ADP = N(tele)-phospho-L-histidyl/O-phospho-L-threonyl-[pyruvate, phosphate dikinase] + AMP + H(+). It carries out the reaction N(tele)-phospho-L-histidyl/O-phospho-L-threonyl-[pyruvate, phosphate dikinase] + phosphate + H(+) = N(tele)-phospho-L-histidyl/L-threonyl-[pyruvate, phosphate dikinase] + diphosphate. Its function is as follows. Bifunctional serine/threonine kinase and phosphorylase involved in the regulation of the pyruvate, phosphate dikinase (PPDK) by catalyzing its phosphorylation/dephosphorylation. This chain is Putative pyruvate, phosphate dikinase regulatory protein, found in Afipia carboxidovorans (strain ATCC 49405 / DSM 1227 / KCTC 32145 / OM5) (Oligotropha carboxidovorans).